Here is a 279-residue protein sequence, read N- to C-terminus: Prephenate dehydratase (279 aa).

Positions 2 to 178 constitute a Prephenate dehydratase domain; sequence KIAYLGPRGS…NSTRFWLLGK (177 aa). In terms of domain architecture, ACT spans 194-270; that stretch reads LALTLPDNLP…LGVKVRLLGN (77 aa).

It carries out the reaction prephenate + H(+) = 3-phenylpyruvate + CO2 + H2O. Its pathway is amino-acid biosynthesis; L-phenylalanine biosynthesis; phenylpyruvate from prephenate: step 1/1. The chain is Prephenate dehydratase (pheA) from Lactococcus lactis subsp. lactis (strain IL1403) (Streptococcus lactis).